Reading from the N-terminus, the 266-residue chain is rRNA adenine N-6-methyltransferase (266 aa).

S-adenosyl-L-methionine-binding residues include His-14, Thr-16, Gly-41, Glu-62, Asp-87, and Asn-103.

This sequence belongs to the class I-like SAM-binding methyltransferase superfamily. rRNA adenine N(6)-methyltransferase family.

Functionally, involved in erythromycin resistance. The polypeptide is rRNA adenine N-6-methyltransferase (ermFU) (Bacteroides fragilis).